The following is a 168-amino-acid chain: Putative F-box protein At1g30945 (168 aa).

Residues 5–52 enclose the F-box domain; sequence KTFDSISNDLFLEILLRLSTKSIDRSRCVSKQWASILCSQDFTESEKF.

In Arabidopsis thaliana (Mouse-ear cress), this protein is Putative F-box protein At1g30945.